Reading from the N-terminus, the 264-residue chain is MTTQSLPDFHIVIPARYASQRFPQKLMADLGGKPVLQWVYELALKAGAQSVTIATDHQLIEKAAIGFGASVVMTRDDHENGTERLAEVAAKMDWQGDEIVVNVQGDEPFLPVNLIHSSVIALNQDKEAEMATVACAIDQVEDFFNPNVVKVVCDEKQRALYFSRSPMPWDRDGFASNPDRTGLLPVGFPALRHIGLYVYRASLLAKYADLPMSPLERWEKLEQLRFLHQGIKVQVALADGLPTHGVDTPEDLEKLRYQLSLDSI.

It belongs to the KdsB family.

It is found in the cytoplasm. The enzyme catalyses 3-deoxy-alpha-D-manno-oct-2-ulosonate + CTP = CMP-3-deoxy-beta-D-manno-octulosonate + diphosphate. It functions in the pathway nucleotide-sugar biosynthesis; CMP-3-deoxy-D-manno-octulosonate biosynthesis; CMP-3-deoxy-D-manno-octulosonate from 3-deoxy-D-manno-octulosonate and CTP: step 1/1. Its pathway is bacterial outer membrane biogenesis; lipopolysaccharide biosynthesis. Its function is as follows. Activates KDO (a required 8-carbon sugar) for incorporation into bacterial lipopolysaccharide in Gram-negative bacteria. The chain is 3-deoxy-manno-octulosonate cytidylyltransferase from Marinomonas sp. (strain MWYL1).